The chain runs to 486 residues: Bifunctional protein GlmU (486 aa).

The tract at residues 1-241 (MSASDSSSAV…ARELAGVNDR (241 aa)) is pyrophosphorylase. UDP-N-acetyl-alpha-D-glucosamine-binding positions include 13–16 (LAAG), lysine 27, glutamine 84, and 89–90 (GT). Aspartate 114 provides a ligand contact to Mg(2+). Residues glycine 151, glutamate 166, asparagine 181, and asparagine 239 each contribute to the UDP-N-acetyl-alpha-D-glucosamine site. Asparagine 239 is a Mg(2+) binding site. A linker region spans residues 242–262 (VQLAEAGAELNRRTVEAAMRG). Residues 263 to 486 (GATIVDPATT…AQNSVPNQEG (224 aa)) form an N-acetyltransferase region. Residues arginine 344 and lysine 362 each contribute to the UDP-N-acetyl-alpha-D-glucosamine site. Histidine 374 (proton acceptor) is an active-site residue. Positions 377 and 388 each coordinate UDP-N-acetyl-alpha-D-glucosamine. Acetyl-CoA contacts are provided by residues alanine 391, 397 to 398 (NY), serine 416, and alanine 434. The segment at 464–486 (KRPGTAAADAAAAAQNSVPNQEG) is disordered.

The protein in the N-terminal section; belongs to the N-acetylglucosamine-1-phosphate uridyltransferase family. This sequence in the C-terminal section; belongs to the transferase hexapeptide repeat family. Homotrimer. The cofactor is Mg(2+).

The protein localises to the cytoplasm. The enzyme catalyses alpha-D-glucosamine 1-phosphate + acetyl-CoA = N-acetyl-alpha-D-glucosamine 1-phosphate + CoA + H(+). The catalysed reaction is N-acetyl-alpha-D-glucosamine 1-phosphate + UTP + H(+) = UDP-N-acetyl-alpha-D-glucosamine + diphosphate. The protein operates within nucleotide-sugar biosynthesis; UDP-N-acetyl-alpha-D-glucosamine biosynthesis; N-acetyl-alpha-D-glucosamine 1-phosphate from alpha-D-glucosamine 6-phosphate (route II): step 2/2. Its pathway is nucleotide-sugar biosynthesis; UDP-N-acetyl-alpha-D-glucosamine biosynthesis; UDP-N-acetyl-alpha-D-glucosamine from N-acetyl-alpha-D-glucosamine 1-phosphate: step 1/1. It participates in bacterial outer membrane biogenesis; LPS lipid A biosynthesis. In terms of biological role, catalyzes the last two sequential reactions in the de novo biosynthetic pathway for UDP-N-acetylglucosamine (UDP-GlcNAc). The C-terminal domain catalyzes the transfer of acetyl group from acetyl coenzyme A to glucosamine-1-phosphate (GlcN-1-P) to produce N-acetylglucosamine-1-phosphate (GlcNAc-1-P), which is converted into UDP-GlcNAc by the transfer of uridine 5-monophosphate (from uridine 5-triphosphate), a reaction catalyzed by the N-terminal domain. This is Bifunctional protein GlmU from Corynebacterium efficiens (strain DSM 44549 / YS-314 / AJ 12310 / JCM 11189 / NBRC 100395).